Reading from the N-terminus, the 252-residue chain is Type IV pilus assembly protein PilF (252 aa).

A signal peptide spans 1-17; it reads MTVRAALVFLLAVGLTG. C18 carries the N-palmitoyl cysteine lipid modification. C18 is lipidated: S-diacylglycerol cysteine. TPR repeat units lie at residues 32 to 67, 84 to 101, 104 to 133, 139 to 171, 174 to 203, and 208 to 235; these read GRDE…LEID, EMEP…LASD, NARV…EASQ, ERSR…LRLN, QPSV…LFAQ, and NARS…GLQL.

Interacts with PilQ; this interaction is essential for assemby of PilQ into secretins.

The protein resides in the cell outer membrane. Functionally, essential component of the type IV pilus (T4P) that plays a role in surface and host cell adhesion, colonization, biofilm maturation, virulence, and twitching, a form of surface-associated motility facilitated by cycles of extension, adhesion, and retraction of T4P fibers. Plays an essential role in the outer membrane localization and assembly of PilQ into secretins which are dodecamers of PilQ. The chain is Type IV pilus assembly protein PilF (pilF) from Pseudomonas aeruginosa (strain ATCC 15692 / DSM 22644 / CIP 104116 / JCM 14847 / LMG 12228 / 1C / PRS 101 / PAO1).